A 576-amino-acid polypeptide reads, in one-letter code: Proteinaceous RNase P 3 (576 aa).

The span at 65–75 (NRRSRHDDESP) shows a compositional bias: basic and acidic residues. Positions 65-88 (NRRSRHDDESPKNPNKKKKGNRNP) are disordered. PPR repeat units follow at residues 88–123 (PEKSLLINLHSCSKRKDLSAALALYDAAITSSDIRL), 129–166 (QSLLYLCSAFISDPSLQTVAIDRGFQIFDRMVSSGISP), 167–201 (NESSVTAVARLAAAKGDGDYAFKLVKDLVAVGGVS), and 204–238 (RLRTYAPALLCFCDTLEAEKGYEVEDHMDASGIVL). The 236-residue stretch at 335–570 (SSAGKCLSCD…KEESLRSWMC (236 aa)) folds into the PRORP domain. The Zn(2+) site is built by Cys-340 and Cys-343. Mn(2+) contacts are provided by Asp-402, Asp-480, Asp-481, and Asp-499. The Zn(2+) site is built by His-553 and Cys-570.

The protein belongs to the PPR family. P subfamily. Mg(2+) is required as a cofactor. It depends on Mn(2+) as a cofactor.

The protein localises to the nucleus. The catalysed reaction is Endonucleolytic cleavage of RNA, removing 5'-extranucleotides from tRNA precursor.. In terms of biological role, endonuclease RNase P responsible for the 5' maturation of tRNA precursors. Also involved in the maturation of mRNA and small nucleolar RNA (snoRNA). The protein is Proteinaceous RNase P 3 (PRORP3) of Arabidopsis thaliana (Mouse-ear cress).